The following is a 198-amino-acid chain: 7-methyl-GTP pyrophosphatase (198 aa).

D69 (proton acceptor) is an active-site residue.

This sequence belongs to the Maf family. YceF subfamily. Requires a divalent metal cation as cofactor.

It localises to the cytoplasm. It catalyses the reaction N(7)-methyl-GTP + H2O = N(7)-methyl-GMP + diphosphate + H(+). Nucleoside triphosphate pyrophosphatase that hydrolyzes 7-methyl-GTP (m(7)GTP). May have a dual role in cell division arrest and in preventing the incorporation of modified nucleotides into cellular nucleic acids. This is 7-methyl-GTP pyrophosphatase from Yersinia pseudotuberculosis serotype I (strain IP32953).